Reading from the N-terminus, the 216-residue chain is Peroxiredoxin (216 aa).

Positions 2 to 158 constitute a Thioredoxin domain; it reads VVIGEKFPEV…ILRLVKALKV (157 aa). Cys-46 serves as the catalytic Cysteine sulfenic acid (-SOH) intermediate. A substrate-binding site is contributed by Arg-121. Residues Cys-205 and Cys-211 are joined by a disulfide bond.

This sequence belongs to the peroxiredoxin family. Prx6 subfamily. As to quaternary structure, homodecamer. Pentamer of dimers that assemble into a ring structure.

The protein resides in the cytoplasm. The enzyme catalyses a hydroperoxide + [thioredoxin]-dithiol = an alcohol + [thioredoxin]-disulfide + H2O. Its function is as follows. Thiol-specific peroxidase that catalyzes the reduction of hydrogen peroxide and organic hydroperoxides to water and alcohols, respectively. Plays a role in cell protection against oxidative stress by detoxifying peroxides. This Thermococcus kodakarensis (strain ATCC BAA-918 / JCM 12380 / KOD1) (Pyrococcus kodakaraensis (strain KOD1)) protein is Peroxiredoxin.